A 236-amino-acid polypeptide reads, in one-letter code: UPF0257 lipoprotein YnfC (236 aa).

A signal peptide spans 1–16 (MKYKLLPCLLAILLTG). Cys17 carries N-palmitoyl cysteine lipidation. Residue Cys17 is the site of S-diacylglycerol cysteine attachment.

The protein belongs to the UPF0257 family.

It is found in the cell membrane. This Escherichia coli O45:K1 (strain S88 / ExPEC) protein is UPF0257 lipoprotein YnfC.